The chain runs to 346 residues: Ferredoxin--NADP reductase 1 (346 aa).

Glutamate 37, lysine 45, tyrosine 49, isoleucine 89, proline 124, aspartate 287, and serine 328 together coordinate FAD.

The protein belongs to the ferredoxin--NADP reductase type 2 family. As to quaternary structure, homodimer. It depends on FAD as a cofactor.

It carries out the reaction 2 reduced [2Fe-2S]-[ferredoxin] + NADP(+) + H(+) = 2 oxidized [2Fe-2S]-[ferredoxin] + NADPH. The polypeptide is Ferredoxin--NADP reductase 1 (Bacillus pumilus (strain SAFR-032)).